Reading from the N-terminus, the 228-residue chain is Urease accessory protein UreF (228 aa).

It belongs to the UreF family. As to quaternary structure, ureD, UreF and UreG form a complex that acts as a GTP-hydrolysis-dependent molecular chaperone, activating the urease apoprotein by helping to assemble the nickel containing metallocenter of UreC. The UreE protein probably delivers the nickel.

The protein resides in the cytoplasm. Its function is as follows. Required for maturation of urease via the functional incorporation of the urease nickel metallocenter. The protein is Urease accessory protein UreF of Yersinia pestis bv. Antiqua (strain Antiqua).